A 415-amino-acid chain; its full sequence is Serine hydroxymethyltransferase (415 aa).

(6S)-5,6,7,8-tetrahydrofolate contacts are provided by residues Leu117 and 121 to 123 (GHL). Lys226 bears the N6-(pyridoxal phosphate)lysine mark.

Belongs to the SHMT family. As to quaternary structure, homodimer. Requires pyridoxal 5'-phosphate as cofactor.

The protein localises to the cytoplasm. The enzyme catalyses (6R)-5,10-methylene-5,6,7,8-tetrahydrofolate + glycine + H2O = (6S)-5,6,7,8-tetrahydrofolate + L-serine. The protein operates within one-carbon metabolism; tetrahydrofolate interconversion. Its pathway is amino-acid biosynthesis; glycine biosynthesis; glycine from L-serine: step 1/1. In terms of biological role, catalyzes the reversible interconversion of serine and glycine with tetrahydrofolate (THF) serving as the one-carbon carrier. This reaction serves as the major source of one-carbon groups required for the biosynthesis of purines, thymidylate, methionine, and other important biomolecules. Also exhibits THF-independent aldolase activity toward beta-hydroxyamino acids, producing glycine and aldehydes, via a retro-aldol mechanism. This chain is Serine hydroxymethyltransferase, found in Dehalococcoides mccartyi (strain ATCC BAA-2100 / JCM 16839 / KCTC 5957 / BAV1).